The primary structure comprises 331 residues: Large ribosomal subunit protein uL3 (331 aa).

This sequence belongs to the universal ribosomal protein uL3 family. Part of the 50S ribosomal subunit. Forms a cluster with proteins L14 and L24e.

In terms of biological role, one of the primary rRNA binding proteins, it binds directly near the 3'-end of the 23S rRNA, where it nucleates assembly of the 50S subunit. The protein is Large ribosomal subunit protein uL3 of Archaeoglobus fulgidus (strain ATCC 49558 / DSM 4304 / JCM 9628 / NBRC 100126 / VC-16).